A 185-amino-acid chain; its full sequence is Ribosome-recycling factor (185 aa).

Belongs to the RRF family.

The protein localises to the cytoplasm. In terms of biological role, responsible for the release of ribosomes from messenger RNA at the termination of protein biosynthesis. May increase the efficiency of translation by recycling ribosomes from one round of translation to another. This Listeria monocytogenes serotype 4a (strain HCC23) protein is Ribosome-recycling factor.